The chain runs to 71 residues: MEKNTVTVPKTLFSQVIHIFKYAAINLGLPFLNGVMLGFGEIFAHAFIHSLGWAPGHTRIYSIQRHQYIQA.

Residues Tyr-22 to Ala-44 traverse the membrane as a helical segment.

The protein belongs to the MIM1 family. In terms of assembly, component of the mitochondrial outer import machinery (MIM) complex containing at least mim1 and mim2. Interacts with mim2. Interacts with mitophagy receptor atg43.

The protein localises to the mitochondrion outer membrane. Component of the mitochondrial outer import machinery (MIM) complex that mediates transport of proteins into mitochondrial compartments. Promotes the insertion of tom70 into the outer mitochondrial membrane. Promotes the insertion of atg43 into the outer mitochondrial membrane. The MIM complex cooperates with the receptor tom70 in binding of precursor proteins and promotes their insertion and assembly into the outer membrane. Involved in import of the subset of proteins with multiple alpha-helical transmembrane segments. Required for the assembly of the TOM (translocase of outer membrane) receptor complex, which is responsible for the recognition and translocation of cytosolically synthesized mitochondrial preproteins. The sequence is that of Mitochondrial import protein 1 from Schizosaccharomyces pombe (strain 972 / ATCC 24843) (Fission yeast).